Consider the following 404-residue polypeptide: Glycosylated lysosomal membrane protein (404 aa).

Residues 1–35 (MRGSVERGWGWGHCASSPLLLWTLLLFAAPFGLLG) form the signal peptide. The Lumenal segment spans residues 36-371 (EKTRQLSLEV…GRLVPTSPGH (336 aa)). N-linked (GlcNAc...) asparagine glycosylation is found at asparagine 65, asparagine 134, asparagine 159, asparagine 186, and asparagine 229. A helical transmembrane segment spans residues 372 to 392 (HGSALGAPGLMLLGGGLVLLL). At 393 to 404 (HHRKYSEYQSIN) the chain is on the cytoplasmic side. Residues 400-404 (YQSIN) carry the Lysosomal targeting motif motif.

It belongs to the GLMP family. Interacts (via lumenal domain) with lysosomal protein MFSD1; the interaction starts while both proteins are still in the endoplasmic reticulum and is required for stabilization of MFSD1 in lysosomes but has no direct effect on its targeting to lysosomes or transporter activity. In terms of processing, highly N-glycosylated. N-glycosylation is essential for GLMP stability and for MFSD1 lysosomal localization.

It localises to the lysosome membrane. In terms of biological role, required to protect lysosomal transporter MFSD1 from lysosomal proteolysis and for MFSD1 lysosomal localization. The sequence is that of Glycosylated lysosomal membrane protein from Pongo abelii (Sumatran orangutan).